The primary structure comprises 620 residues: Chaperone protein HscA homolog (620 aa).

The protein belongs to the heat shock protein 70 family.

In terms of biological role, chaperone involved in the maturation of iron-sulfur cluster-containing proteins. Has a low intrinsic ATPase activity which is markedly stimulated by HscB. The chain is Chaperone protein HscA homolog from Acinetobacter baylyi (strain ATCC 33305 / BD413 / ADP1).